The primary structure comprises 122 residues: Biogenesis of lysosome-related organelles complex 1 subunit CNL1 (122 aa).

Positions 1–10 (MQDNSSHSRE) are enriched in basic and acidic residues. The segment at 1–21 (MQDNSSHSRESASAGDDPLGI) is disordered. Residues 63–95 (ENTIDKNIAKFKELLEKCDTLENHYEMLNQLAI) adopt a coiled-coil conformation.

Belongs to the BLOC1S4 family. In terms of assembly, component of the biogenesis of lysosome-related organelles complex-1 (BLOC-1) composed of at least BLI1, BLS1, CNL1, KXD1, SNN1 and VAB2.

Its subcellular location is the cytoplasm. Component of the biogenesis of lysosome-related organelles complex-1 (BLOC-1), a complex that is involved in endosomal cargo sorting. The polypeptide is Biogenesis of lysosome-related organelles complex 1 subunit CNL1 (CNL1) (Saccharomyces cerevisiae (strain ATCC 204508 / S288c) (Baker's yeast)).